The primary structure comprises 1131 residues: DNA polymerase II large subunit (1131 aa).

It belongs to the archaeal DNA polymerase II family. In terms of assembly, heterodimer of a large subunit and a small subunit.

The enzyme catalyses DNA(n) + a 2'-deoxyribonucleoside 5'-triphosphate = DNA(n+1) + diphosphate. It carries out the reaction Exonucleolytic cleavage in the 3'- to 5'-direction to yield nucleoside 5'-phosphates.. In terms of biological role, possesses two activities: a DNA synthesis (polymerase) and an exonucleolytic activity that degrades single-stranded DNA in the 3'- to 5'-direction. Has a template-primer preference which is characteristic of a replicative DNA polymerase. The sequence is that of DNA polymerase II large subunit from Methanococcus maripaludis (strain C5 / ATCC BAA-1333).